A 425-amino-acid chain; its full sequence is Glutamate-1-semialdehyde 2,1-aminomutase (425 aa).

At Lys265 the chain carries N6-(pyridoxal phosphate)lysine.

The protein belongs to the class-III pyridoxal-phosphate-dependent aminotransferase family. HemL subfamily. Homodimer. The cofactor is pyridoxal 5'-phosphate.

Its subcellular location is the cytoplasm. It carries out the reaction (S)-4-amino-5-oxopentanoate = 5-aminolevulinate. It participates in porphyrin-containing compound metabolism; protoporphyrin-IX biosynthesis; 5-aminolevulinate from L-glutamyl-tRNA(Glu): step 2/2. The polypeptide is Glutamate-1-semialdehyde 2,1-aminomutase (Psychromonas ingrahamii (strain DSM 17664 / CCUG 51855 / 37)).